A 541-amino-acid chain; its full sequence is Glucose-6-phosphate isomerase (541 aa).

Glutamate 354 functions as the Proton donor in the catalytic mechanism. Catalysis depends on residues histidine 385 and lysine 505.

It belongs to the GPI family.

It localises to the cytoplasm. It catalyses the reaction alpha-D-glucose 6-phosphate = beta-D-fructose 6-phosphate. It functions in the pathway carbohydrate biosynthesis; gluconeogenesis. Its pathway is carbohydrate degradation; glycolysis; D-glyceraldehyde 3-phosphate and glycerone phosphate from D-glucose: step 2/4. In terms of biological role, catalyzes the reversible isomerization of glucose-6-phosphate to fructose-6-phosphate. The chain is Glucose-6-phosphate isomerase from Cupriavidus metallidurans (strain ATCC 43123 / DSM 2839 / NBRC 102507 / CH34) (Ralstonia metallidurans).